The primary structure comprises 234 residues: N-(5'-phosphoribosyl)anthranilate isomerase 1 (234 aa).

This sequence belongs to the TrpF family.

It catalyses the reaction N-(5-phospho-beta-D-ribosyl)anthranilate = 1-(2-carboxyphenylamino)-1-deoxy-D-ribulose 5-phosphate. It participates in amino-acid biosynthesis; L-tryptophan biosynthesis; L-tryptophan from chorismate: step 3/5. The chain is N-(5'-phosphoribosyl)anthranilate isomerase 1 (trpF1) from Methanosarcina mazei (strain ATCC BAA-159 / DSM 3647 / Goe1 / Go1 / JCM 11833 / OCM 88) (Methanosarcina frisia).